Consider the following 315-residue polypeptide: Fucose-specific lectin (315 aa).

Repeat copies occupy residues 2–53 (STPG…KNVI), 54–103 (GNAK…GGAK), 104–155 (FQVA…LGGA), 156–207 (LPGT…TIFD), 208–260 (RAPP…ITPV), and 261–315 (IQGS…LPPA). Positions 2–315 (STPGAQQVLF…QLGRSALPPA (314 aa)) are 6 X approximate tandem repeats. The alpha-L-fucose site is built by arginine 25, glutamate 37, tryptophan 44, arginine 73, glutamate 85, tryptophan 94, glycine 98, arginine 126, glutamate 138, tryptophan 146, threonine 150, arginine 177, glutamine 189, tryptophan 198, arginine 230, and glutamine 242. Zn(2+) is bound by residues cysteine 244, aspartate 246, and histidine 252. Residues arginine 282 and glutamate 296 each coordinate alpha-L-fucose.

The protein belongs to the fungal fucose-specific lectin family. Homodimer.

Functionally, multispecific lectin that is able to recognize L-fucose in all possible linkages. These could be found not only in decomposed plant matter in soil, which is the natural environment for A.fumigatus, but also in various epitopes on human tissues. Mediates binding of A.fumigatus conidia to airway mucin in a fucose dependent manner. Stimulates IL-8 production by human bronchial cells in a dose-dependent manner, contributing to the inflammatory response observed upon the exposure of a patient to A.fumigatus, and thus might be an important virulence factor involved in an early stage of A.fumigatus infection. The polypeptide is Fucose-specific lectin (Aspergillus fumigatus (strain ATCC MYA-4609 / CBS 101355 / FGSC A1100 / Af293) (Neosartorya fumigata)).